A 98-amino-acid chain; its full sequence is Small ribosomal subunit protein uS17 (98 aa).

The protein belongs to the universal ribosomal protein uS17 family. As to quaternary structure, part of the 30S ribosomal subunit.

Its function is as follows. One of the primary rRNA binding proteins, it binds specifically to the 5'-end of 16S ribosomal RNA. This Synechococcus sp. (strain CC9605) protein is Small ribosomal subunit protein uS17.